A 430-amino-acid chain; its full sequence is Tol-Pal system protein TolB (430 aa).

The signal sequence occupies residues 1-21 (MKQAFRVALGFLVLWASVLHA).

The protein belongs to the TolB family. As to quaternary structure, the Tol-Pal system is composed of five core proteins: the inner membrane proteins TolA, TolQ and TolR, the periplasmic protein TolB and the outer membrane protein Pal. They form a network linking the inner and outer membranes and the peptidoglycan layer.

It is found in the periplasm. Functionally, part of the Tol-Pal system, which plays a role in outer membrane invagination during cell division and is important for maintaining outer membrane integrity. TolB occupies a key intermediary position in the Tol-Pal system because it communicates directly with both membrane-embedded components, Pal in the outer membrane and TolA in the inner membrane. The polypeptide is Tol-Pal system protein TolB (Yersinia pestis).